The chain runs to 216 residues: Protein Syd (216 aa).

It belongs to the Syd family.

The protein resides in the cell inner membrane. Its function is as follows. Interacts with the SecY protein in vivo. May bind preferentially to an uncomplexed state of SecY, thus functioning either as a chelating agent for excess SecY in the cell or as a regulatory factor that negatively controls the translocase function. This chain is Protein Syd, found in Shewanella baltica (strain OS155 / ATCC BAA-1091).